A 565-amino-acid chain; its full sequence is Effector protease OspD3 (565 aa).

The protein belongs to the Toxin_15 family.

It localises to the secreted. Functionally, effector protease that disrupts necroptosis in host cells by mediating proteolytic cleavage of host RIPK1 and RIPK3. In Shigella flexneri, this protein is Effector protease OspD3.